Consider the following 264-residue polypeptide: Undecaprenyl-diphosphatase (264 aa).

A run of 7 helical transmembrane segments spans residues 38–58 (RSDF…VLVF), 75–95 (REYV…GLVV), 106–126 (VSPV…VEAY), 136–156 (VTWT…VFPG), 181–201 (FVFL…FLEM), 217–237 (VAFL…MGYI), and 242–262 (FTAF…WLPS).

It belongs to the UppP family.

It localises to the cell membrane. The enzyme catalyses di-trans,octa-cis-undecaprenyl diphosphate + H2O = di-trans,octa-cis-undecaprenyl phosphate + phosphate + H(+). Functionally, catalyzes the dephosphorylation of undecaprenyl diphosphate (UPP). Confers resistance to bacitracin. This is Undecaprenyl-diphosphatase from Stenotrophomonas maltophilia (strain K279a).